We begin with the raw amino-acid sequence, 304 residues long: UPF0282 protein TSIB_1029 (304 aa).

The protein belongs to the UPF0282 family.

This is UPF0282 protein TSIB_1029 from Thermococcus sibiricus (strain DSM 12597 / MM 739).